Consider the following 198-residue polypeptide: Recombination protein RecR (198 aa).

The segment at 57 to 72 adopts a C4-type zinc-finger fold; the sequence is CSVCGHITENDPCYIC. Positions 80–175 constitute a Toprim domain; it reads SVICVVEDDK…KVTRLAQGLS (96 aa).

Belongs to the RecR family.

Its function is as follows. May play a role in DNA repair. It seems to be involved in an RecBC-independent recombinational process of DNA repair. It may act with RecF and RecO. The polypeptide is Recombination protein RecR (Staphylococcus aureus (strain Mu3 / ATCC 700698)).